Here is a 155-residue protein sequence, read N- to C-terminus: Pathogenesis-related protein STH-2 (155 aa).

This sequence belongs to the BetVI family.

The polypeptide is Pathogenesis-related protein STH-2 (STH-2) (Solanum tuberosum (Potato)).